Consider the following 207-residue polypeptide: MTDPEHSGQRAQVRGARFRERVLDATIACITEAGVDNVGFADVARKAGVNGVSLYRRWKTVPRLLIDALLTRTQAEVPIPDTGSVHRDLEIFATELTKFAQTPIGTALIRFTVVSADSPEVDVSRREFWMQRLTAAEEIIERGKNRGEVDSSTDSRLVVLTLGGLVHIYVTHLGTDIPTSLPHQAVSLILSGVTSGVTQARTNAQMG.

One can recognise an HTH tetR-type domain in the interval 16–76 (ARFRERVLDA…DALLTRTQAE (61 aa)). A DNA-binding region (H-T-H motif) is located at residues 39 to 58 (GFADVARKAGVNGVSLYRRW).

Functionally, may regulate the expression of genes involved in the degradation of the Pseudomonas aeruginosa quorum sensing signal molecules HHQ (2-heptyl-4-quinolone) and PQS (2-heptyl-3-hydroxy-4-quinolone). In Rhodococcus erythropolis (Arthrobacter picolinophilus), this protein is HTH-type transcriptional regulator AqdR.